Reading from the N-terminus, the 144-residue chain is Eukaryotic translation initiation factor 1A (144 aa).

Residues 1 to 15 (MPKNKGKGGKNRKRG) show a composition bias toward basic residues. Disordered regions lie at residues 1-25 (MPKNKGKGGKNRKRGKNEADDDKRE) and 120-144 (DVDGPEEGEGDSDYIQFEDEDIDKI). Residues 16–25 (KNEADDDKRE) are compositionally biased toward basic and acidic residues. In terms of domain architecture, S1-like spans 22–96 (DKRELVFKED…DKADVILKYM (75 aa)).

Belongs to the eIF-1A family.

Its function is as follows. Seems to be required for maximal rate of protein biosynthesis. Enhances ribosome dissociation into subunits and stabilizes the binding of the initiator Met-tRNA(I) to 40 S ribosomal subunits. The chain is Eukaryotic translation initiation factor 1A from Triticum aestivum (Wheat).